Reading from the N-terminus, the 308-residue chain is MSGGLDVLQMKEEDVLKFLAAGTHLGGTNLDFQMEQYVYKRKSDGVYIINLKKTWEKLLLAARAIVAIENPADVCVISSRNTGQRAVLKFASATGSTTFAGRFTPGTFTNQIQAAFREPRLLIVTDPRADHQPLTEASYVNIPTIALCNTDSPLRYVDIAIPCNNKGPHSVGLMWWMLAREVLRMRGTISREHPWEVMPDLYFYRDPEEIEKEEQAAAEKAVGKEEFQGEWTAPVPDFNQPEVADWSEGVQVPSVPIQQFPAGIEAPGKPAPAEVYAEDWSAQPATEDWSAAPTAQAGDWGGATADWS.

Position 2 is an N-acetylserine (S2). Laminin-binding regions lie at residues 161–180 (IPCN…MLAR) and 205–229 (RDPE…EFQG). 5 [DE]-W-[ST] repeats span residues 230–232 (EWT), 245–247 (DWS), 279–281 (DWS), 288–290 (DWS), and 306–308 (DWS). Positions 242 to 308 (EVADWSEGVQ…DWGGATADWS (67 aa)) are laminin-binding. Positions 262–308 (AGIEAPGKPAPAEVYAEDWSAQPATEDWSAAPTAQAGDWGGATADWS) are disordered.

The protein belongs to the universal ribosomal protein uS2 family. Monomer (37LRP) and homodimer (67LR). Component of the small ribosomal subunit. Mature ribosomes consist of a small (40S) and a large (60S) subunit. The 40S subunit contains about 33 different proteins and 1 molecule of RNA (18S). The 60S subunit contains about 49 different proteins and 3 molecules of RNA (28S, 5.8S and 5S). Interacts with rps21. Interacts with several laminins including at least lamb1. Interacts with mdk. Acylated. Acylation may be a prerequisite for conversion of the monomeric 37 kDa laminin receptor precursor (37LRP) to the mature dimeric 67 kDa laminin receptor (67LR), and may provide a mechanism for membrane association. In terms of processing, cleaved by stromelysin-3 (ST3) at the cell surface. Cleavage by stromelysin-3 may be a mechanism to alter cell-extracellular matrix interactions.

Its subcellular location is the cell membrane. The protein localises to the cytoplasm. It localises to the nucleus. Functionally, required for the assembly and/or stability of the 40S ribosomal subunit. Required for the processing of the 20S rRNA-precursor to mature 18S rRNA in a late step of the maturation of 40S ribosomal subunits. Also functions as a cell surface receptor for laminin. Plays a role in cell adhesion to the basement membrane and in the consequent activation of signaling transduction pathways. May play a role in cell fate determination and tissue morphogenesis. This chain is Small ribosomal subunit protein uS2 (rpsa), found in Danio rerio (Zebrafish).